A 159-amino-acid chain; its full sequence is Growth arrest and DNA damage-inducible protein GADD45 gamma (159 aa).

Residues 43-86 (VYESAKVLNVDPDNVTFCVLAADEEDEGDIALQIHFTLIQAFCC) are homodimerization.

The protein belongs to the GADD45 family. Undergoes concentration-dependent homodimerization, which is required for growth inhibititory activity and enhances interaction with PCNA. Interacts with GADD45GIP1. Interacts with PCNA.

Involved in the regulation of growth and apoptosis. Mediates activation of stress-responsive MTK1/MEKK4 MAPKKK. The sequence is that of Growth arrest and DNA damage-inducible protein GADD45 gamma (Gadd45g) from Rattus norvegicus (Rat).